The following is a 136-amino-acid chain: Fluoride-specific ion channel FluC (136 aa).

The next 4 membrane-spanning stretches (helical) occupy residues 3–23 (TLPP…GAVL), 46–66 (ATLA…GVLF), 78–98 (LLIG…SLEV), and 109–129 (FAAL…VFGL). 2 residues coordinate Na(+): glycine 86 and threonine 89.

This sequence belongs to the fluoride channel Fluc/FEX (TC 1.A.43) family.

It is found in the cell inner membrane. The enzyme catalyses fluoride(in) = fluoride(out). Its activity is regulated as follows. Na(+) is not transported, but it plays an essential structural role and its presence is essential for fluoride channel function. Fluoride-specific ion channel. Important for reducing fluoride concentration in the cell, thus reducing its toxicity. The polypeptide is Fluoride-specific ion channel FluC (Erythrobacter litoralis (strain HTCC2594)).